The primary structure comprises 149 residues: Low molecular weight protein-tyrosine-phosphatase Wzb (149 aa).

Catalysis depends on Cys9, which acts as the Nucleophile. Residue Arg15 is part of the active site. Residue Asp115 is the Proton donor of the active site.

It belongs to the low molecular weight phosphotyrosine protein phosphatase family.

It catalyses the reaction O-phospho-L-tyrosyl-[protein] + H2O = L-tyrosyl-[protein] + phosphate. The protein operates within glycan metabolism; exopolysaccharide biosynthesis. In terms of biological role, dephosphorylates Wzc. Required for the extracellular polysaccharide colanic acid synthesis. Probably involved in the export of colanic acid from the cell to medium. Involved in protection of cells against contact-dependent growth inhibition (CDI). This is Low molecular weight protein-tyrosine-phosphatase Wzb (wzb) from Salmonella typhimurium (strain LT2 / SGSC1412 / ATCC 700720).